We begin with the raw amino-acid sequence, 490 residues long: Glutamyl-tRNA(Gln) amidotransferase subunit A (490 aa).

Active-site charge relay system residues include K79 and S154. The Acyl-ester intermediate role is filled by S178.

It belongs to the amidase family. GatA subfamily. In terms of assembly, heterotrimer of A, B and C subunits.

It catalyses the reaction L-glutamyl-tRNA(Gln) + L-glutamine + ATP + H2O = L-glutaminyl-tRNA(Gln) + L-glutamate + ADP + phosphate + H(+). Its function is as follows. Allows the formation of correctly charged Gln-tRNA(Gln) through the transamidation of misacylated Glu-tRNA(Gln) in organisms which lack glutaminyl-tRNA synthetase. The reaction takes place in the presence of glutamine and ATP through an activated gamma-phospho-Glu-tRNA(Gln). The sequence is that of Glutamyl-tRNA(Gln) amidotransferase subunit A from Roseiflexus castenholzii (strain DSM 13941 / HLO8).